A 108-amino-acid polypeptide reads, in one-letter code: UPF0102 protein Shewana3_3881 (108 aa).

The protein belongs to the UPF0102 family.

The protein is UPF0102 protein Shewana3_3881 of Shewanella sp. (strain ANA-3).